Consider the following 211-residue polypeptide: Large ribosomal subunit protein uL3 (211 aa).

The tract at residues 122 to 157 (NQKRNNFGRGPMSHGSKNHRAPGSIGAGTTPGRVYP) is disordered.

Belongs to the universal ribosomal protein uL3 family. In terms of assembly, part of the 50S ribosomal subunit. Forms a cluster with proteins L14 and L19.

Functionally, one of the primary rRNA binding proteins, it binds directly near the 3'-end of the 23S rRNA, where it nucleates assembly of the 50S subunit. In Trichormus variabilis (strain ATCC 29413 / PCC 7937) (Anabaena variabilis), this protein is Large ribosomal subunit protein uL3.